Reading from the N-terminus, the 537-residue chain is Glucan 1,6-alpha-glucosidase (537 aa).

The active-site Nucleophile is Asp-194. The Proton donor role is filled by Glu-236.

The protein belongs to the glycosyl hydrolase 13 family.

It localises to the cytoplasm. It carries out the reaction Hydrolysis of (1-&gt;6)-alpha-D-glucosidic linkages in (1-&gt;6)-alpha-D-glucans and derived oligosaccharides.. In terms of biological role, the physiological substrates may be short isomaltosaccharides. This is Glucan 1,6-alpha-glucosidase (dexB) from Streptococcus dysgalactiae subsp. equisimilis (Streptococcus equisimilis).